Consider the following 57-residue polypeptide: Large ribosomal subunit protein bL32 (57 aa).

Positions 1–19 (MATPKRRMSRANTRSRRAQ) are enriched in basic residues. Residues 1 to 20 (MATPKRRMSRANTRSRRAQW) form a disordered region.

This sequence belongs to the bacterial ribosomal protein bL32 family.

This is Large ribosomal subunit protein bL32 from Mycobacterium leprae (strain Br4923).